A 539-amino-acid chain; its full sequence is 2,3-dihydroxybenzoate-AMP ligase (539 aa).

An ATP-binding site is contributed by Gly191. Substrate is bound by residues 234-235 (HN) and Ser240. Residues Gly307, Val329, Asp413, Arg428, and Lys519 each contribute to the ATP site. Lys519 contributes to the substrate binding site.

This sequence belongs to the ATP-dependent AMP-binding enzyme family.

It is found in the cytoplasm. The enzyme catalyses 2,3-dihydroxybenzoate + holo-[ACP] + ATP = 2,3-dihydroxybenzoyl-[ACP] + AMP + diphosphate. Its pathway is siderophore biosynthesis; bacillibactin biosynthesis. Its function is as follows. Involved in the biosynthesis of the catecholic siderophore bacillibactin. Catalyzes the activation of the carboxylate group of 2,3-dihydroxy-benzoate (DHB), via ATP-dependent PPi exchange reactions, to the acyladenylate. In Bacillus subtilis (strain 168), this protein is 2,3-dihydroxybenzoate-AMP ligase.